The chain runs to 269 residues: Signal recognition particle receptor subunit beta (269 aa).

The chain crosses the membrane as a helical span at residues 35–55 (LLSVAVAVLAVLLTLVFWKFI). GTP is bound by residues 69–77 (GLCDSGKTL) and 90–93 (TQTS). A Phosphoserine modification is found at Ser-110. Gly-118 serves as a coordination point for GTP. Thr-212 carries the phosphothreonine modification. Ala-246 provides a ligand contact to GTP.

It belongs to the SRP receptor beta subunit family. Heterodimer with SRPRA.

The protein localises to the endoplasmic reticulum membrane. Its function is as follows. Component of the signal recognition particle (SRP) complex receptor (SR). Ensures, in conjunction with the SRP complex, the correct targeting of the nascent secretory proteins to the endoplasmic reticulum membrane system. May mediate the membrane association of SR. The chain is Signal recognition particle receptor subunit beta (Srprb) from Rattus norvegicus (Rat).